The sequence spans 192 residues: Ion-translocating oxidoreductase complex subunit A (192 aa).

6 helical membrane passes run 5–25 (VLLL…FLGL), 39–59 (IGMG…AYLV), 67–87 (LGIE…VVQF), 102–122 (LLGI…VALL), 134–154 (IIYG…FASM), and 171–191 (SIAM…TGLV).

It belongs to the NqrDE/RnfAE family. The complex is composed of six subunits: RnfA, RnfB, RnfC, RnfD, RnfE and RnfG.

It is found in the cell inner membrane. Its function is as follows. Part of a membrane-bound complex that couples electron transfer with translocation of ions across the membrane. The chain is Ion-translocating oxidoreductase complex subunit A from Vibrio parahaemolyticus serotype O3:K6 (strain RIMD 2210633).